A 132-amino-acid chain; its full sequence is Dormancy-associated protein 1 (132 aa).

Residues 53–76 form a disordered region; that stretch reads MPAAVSPGTPTTPTTPTTPRKDNV. Residues 61–70 show a composition bias toward low complexity; that stretch reads TPTTPTTPTT. T64 is modified (phosphothreonine).

It belongs to the DRM1/ARP family. In terms of tissue distribution, isoform 1: Expressed mainly in the low bolt. Isoform 2: Expressed mainly in the low bolt. Detected in flowers. Isoform 4: Expressed mainly in the low bolt. Isoform 5: Expressed mainly in the 6 days old seedlings. Detected in 16 days old seedlings, axil, low bolt and floral samples, but only barely in leaves and top bolt.

In Arabidopsis thaliana (Mouse-ear cress), this protein is Dormancy-associated protein 1.